The primary structure comprises 901 residues: HTH-type transcriptional regulator MalT (901 aa).

39–46 (SPAGYGKT) is an ATP binding site. The HTH luxR-type domain occupies 829 to 894 (ELIRTSPLTQ…DAVQHAQQLL (66 aa)). The H-T-H motif DNA-binding region spans 853–872 (NEQIAGELDVAATTIKTHIR).

This sequence belongs to the MalT family. In terms of assembly, monomer in solution. Oligomerizes to an active state in the presence of the positive effectors ATP and maltotriose.

With respect to regulation, activated by ATP and maltotriose, which are both required for DNA binding. In terms of biological role, positively regulates the transcription of the maltose regulon whose gene products are responsible for uptake and catabolism of malto-oligosaccharides. Specifically binds to the promoter region of its target genes, recognizing a short DNA motif called the MalT box. This chain is HTH-type transcriptional regulator MalT, found in Klebsiella pneumoniae (strain 342).